A 160-amino-acid chain; its full sequence is Nucleotide-binding protein CBU_0114 (160 aa).

It belongs to the YajQ family.

In terms of biological role, nucleotide-binding protein. The protein is Nucleotide-binding protein CBU_0114 of Coxiella burnetii (strain RSA 493 / Nine Mile phase I).